Reading from the N-terminus, the 359-residue chain is Homoserine O-acetyltransferase (359 aa).

Positions 49–332 (VLICHALTGS…QSSYGHDAFL (284 aa)) constitute an AB hydrolase-1 domain. S143 serves as the catalytic Nucleophile. Residue R212 coordinates substrate. Catalysis depends on residues D299 and H328. D329 contacts substrate.

It belongs to the AB hydrolase superfamily. MetX family. Homodimer.

The protein resides in the cytoplasm. It carries out the reaction L-homoserine + acetyl-CoA = O-acetyl-L-homoserine + CoA. The protein operates within amino-acid biosynthesis; L-methionine biosynthesis via de novo pathway; O-acetyl-L-homoserine from L-homoserine: step 1/1. Transfers an acetyl group from acetyl-CoA to L-homoserine, forming acetyl-L-homoserine. This chain is Homoserine O-acetyltransferase, found in Trichormus variabilis (strain ATCC 29413 / PCC 7937) (Anabaena variabilis).